A 320-amino-acid chain; its full sequence is Foldase protein PrsA (320 aa).

Positions 1–20 are cleaved as a signal peptide; the sequence is MKMINKLIVPVTASALLLGA. C21 carries the N-palmitoyl cysteine lipid modification. A lipid anchor (S-diacylglycerol cysteine) is attached at C21. The PpiC domain occupies 139-245; sequence EDSKKASHIL…FGYHIIKADK (107 aa). Residues 159-198 form a disordered region; sequence EGLDDKEAKQKAEEIQKEVSKDPSKFGEIAKKESMDTGSA.

The protein belongs to the PrsA family.

It localises to the cell membrane. It catalyses the reaction [protein]-peptidylproline (omega=180) = [protein]-peptidylproline (omega=0). Functionally, plays a major role in protein secretion by helping the post-translocational extracellular folding of several secreted proteins. The protein is Foldase protein PrsA of Staphylococcus aureus (strain MRSA252).